The primary structure comprises 87 residues: Toxin RelG (87 aa).

Belongs to the RelE toxin family. In terms of assembly, interacts with cognate antitoxin RelF, which neutralizes the toxin. Also interacts with non-cognate antitoxin RelB in vitro, in M.smegmatis this neutralizes the toxicity of this toxin.

Functionally, toxic component of a type II toxin-antitoxin (TA) system. Has RNase activity and preferentially cleaves at the 3'-end of purine ribonucleotides. Overexpression in M.tuberculosis or M.smegmatis inhibits colony formation in a bacteriostatic rather than bacteriocidal fashion. Its toxic effect is neutralized by coexpression with cognate antitoxin RelB2 (shown only for M.smegmatis). Overexpression also increases the number of gentamicin-tolerant and levofloxacin-tolerant persister cells. In combination with cognate antitoxin RelF represses its own promoter. Has been seen to bind DNA in complex with antitoxin RelF but not alone. This Mycobacterium tuberculosis (strain ATCC 25618 / H37Rv) protein is Toxin RelG (relG).